A 274-amino-acid chain; its full sequence is 2,3,4,5-tetrahydropyridine-2,6-dicarboxylate N-succinyltransferase (274 aa).

2 residues coordinate substrate: R104 and D141.

It belongs to the transferase hexapeptide repeat family. In terms of assembly, homotrimer.

The protein localises to the cytoplasm. The enzyme catalyses (S)-2,3,4,5-tetrahydrodipicolinate + succinyl-CoA + H2O = (S)-2-succinylamino-6-oxoheptanedioate + CoA. It functions in the pathway amino-acid biosynthesis; L-lysine biosynthesis via DAP pathway; LL-2,6-diaminopimelate from (S)-tetrahydrodipicolinate (succinylase route): step 1/3. The chain is 2,3,4,5-tetrahydropyridine-2,6-dicarboxylate N-succinyltransferase from Escherichia coli O6:H1 (strain CFT073 / ATCC 700928 / UPEC).